We begin with the raw amino-acid sequence, 448 residues long: N-succinylarginine dihydrolase (448 aa).

Substrate contacts are provided by residues 19 to 28, asparagine 110, and 137 to 138; these read GGLSYGNVAS and HR. Glutamate 174 is a catalytic residue. Substrate is bound at residue arginine 214. Residue histidine 250 is part of the active site. 2 residues coordinate substrate: aspartate 252 and asparagine 365. The active-site Nucleophile is cysteine 371.

The protein belongs to the succinylarginine dihydrolase family. As to quaternary structure, homodimer.

It carries out the reaction N(2)-succinyl-L-arginine + 2 H2O + 2 H(+) = N(2)-succinyl-L-ornithine + 2 NH4(+) + CO2. It participates in amino-acid degradation; L-arginine degradation via AST pathway; L-glutamate and succinate from L-arginine: step 2/5. In terms of biological role, catalyzes the hydrolysis of N(2)-succinylarginine into N(2)-succinylornithine, ammonia and CO(2). This chain is N-succinylarginine dihydrolase, found in Pseudomonas savastanoi pv. phaseolicola (strain 1448A / Race 6) (Pseudomonas syringae pv. phaseolicola (strain 1448A / Race 6)).